The following is a 158-amino-acid chain: Egg cell-secreted protein 1.1 (158 aa).

Positions 1 to 27 (MASKSSFMATFNIVTLMLMVASSTVTA) are cleaved as a signal peptide. A glycan (N-linked (GlcNAc...) asparagine) is linked at Asn122.

Belongs to the plant egg cell-secreted peptide family. In terms of tissue distribution, restricted to female reproductive tissues, specifically accumulating in storage vesicles of the unfertilized egg cell.

It is found in the cytoplasmic vesicle. Its subcellular location is the secreted. Functionally, involved in the regulation of gamete interactions during the double fertilization and to prevent multiple-pollen tube attraction; mediates the redistribution of the gamete fusogen HAP2/GCS1 to the cell surface after secretion upon sperm arrival. This chain is Egg cell-secreted protein 1.1 (EC1.1), found in Arabidopsis thaliana (Mouse-ear cress).